The chain runs to 119 residues: MSEDDVDNSVKDFESGEENEESIGRVILPNKKKGEMFGIVEKMEGASRLSVMCEDGYTRNARIPGRMRKRMWIREKDLVIVKPWEFQPEKADVVYRYTKTQASYLSRNHMLPEVIDIFK.

The disordered stretch occupies residues 1–24 (MSEDDVDNSVKDFESGEENEESIG). The S1-like domain maps to 24-98 (GRVILPNKKK…EKADVVYRYT (75 aa)).

Belongs to the eIF-1A family.

Functionally, seems to be required for maximal rate of protein biosynthesis. Enhances ribosome dissociation into subunits and stabilizes the binding of the initiator Met-tRNA(I) to 40 S ribosomal subunits. This chain is Translation initiation factor 1A (eIF1A), found in Thermoplasma acidophilum (strain ATCC 25905 / DSM 1728 / JCM 9062 / NBRC 15155 / AMRC-C165).